Reading from the N-terminus, the 448-residue chain is Glucose-6-phosphate isomerase (448 aa).

Glu-288 acts as the Proton donor in catalysis. Catalysis depends on residues His-309 and Lys-423.

This sequence belongs to the GPI family.

The protein localises to the cytoplasm. It carries out the reaction alpha-D-glucose 6-phosphate = beta-D-fructose 6-phosphate. It functions in the pathway carbohydrate biosynthesis; gluconeogenesis. It participates in carbohydrate degradation; glycolysis; D-glyceraldehyde 3-phosphate and glycerone phosphate from D-glucose: step 2/4. Its function is as follows. Catalyzes the reversible isomerization of glucose-6-phosphate to fructose-6-phosphate. The sequence is that of Glucose-6-phosphate isomerase from Fusobacterium nucleatum subsp. nucleatum (strain ATCC 25586 / DSM 15643 / BCRC 10681 / CIP 101130 / JCM 8532 / KCTC 2640 / LMG 13131 / VPI 4355).